Consider the following 565-residue polypeptide: Proline--tRNA ligase (565 aa).

It belongs to the class-II aminoacyl-tRNA synthetase family. ProS type 1 subfamily. As to quaternary structure, homodimer.

Its subcellular location is the cytoplasm. It carries out the reaction tRNA(Pro) + L-proline + ATP = L-prolyl-tRNA(Pro) + AMP + diphosphate. Functionally, catalyzes the attachment of proline to tRNA(Pro) in a two-step reaction: proline is first activated by ATP to form Pro-AMP and then transferred to the acceptor end of tRNA(Pro). As ProRS can inadvertently accommodate and process non-cognate amino acids such as alanine and cysteine, to avoid such errors it has two additional distinct editing activities against alanine. One activity is designated as 'pretransfer' editing and involves the tRNA(Pro)-independent hydrolysis of activated Ala-AMP. The other activity is designated 'posttransfer' editing and involves deacylation of mischarged Ala-tRNA(Pro). The misacylated Cys-tRNA(Pro) is not edited by ProRS. The chain is Proline--tRNA ligase from Francisella tularensis subsp. tularensis (strain WY96-3418).